We begin with the raw amino-acid sequence, 478 residues long: Cysteine protease ATG4B (478 aa).

Positions 1 to 15 (MTSLPDRGVSSSSSD) are enriched in polar residues. The segment at 1 to 20 (MTSLPDRGVSSSSSDPLCEG) is disordered. The active-site Nucleophile is Cys164. Catalysis depends on residues Asp361 and His363.

It belongs to the peptidase C54 family. Interacts with ATG8. As to expression, constitutively expressed.

Its subcellular location is the cytoplasm. The enzyme catalyses [protein]-C-terminal L-amino acid-glycyl-phosphatidylethanolamide + H2O = [protein]-C-terminal L-amino acid-glycine + a 1,2-diacyl-sn-glycero-3-phosphoethanolamine. Cysteine protease that plays a key role in autophagy by mediating both proteolytic activation and delipidation of ATG8 family proteins. The protease activity is required for proteolytic activation of ATG8 family proteins: cleaves the C-terminal amino acid of ATG8 proteins to reveal a C-terminal glycine. Exposure of the glycine at the C-terminus is essential for ATG8 proteins conjugation to phosphatidylethanolamine (PE) and insertion to membranes, which is necessary for autophagy. In addition to the protease activity, also mediates delipidation of PE-conjugated ATG8 proteins. The protein is Cysteine protease ATG4B (ATG4B) of Oryza sativa subsp. indica (Rice).